The sequence spans 334 residues: Probable quinone oxidoreductase (334 aa).

It belongs to the zinc-containing alcohol dehydrogenase family. Quinone oxidoreductase subfamily.

The enzyme catalyses 2 a quinone + NADPH + H(+) = 2 a 1,4-benzosemiquinone + NADP(+). The polypeptide is Probable quinone oxidoreductase (ZTA1) (Saccharomyces cerevisiae (strain ATCC 204508 / S288c) (Baker's yeast)).